A 129-amino-acid polypeptide reads, in one-letter code: Large ribosomal subunit protein uL22 (129 aa).

Belongs to the universal ribosomal protein uL22 family. In terms of assembly, part of the 50S ribosomal subunit.

In terms of biological role, this protein binds specifically to 23S rRNA; its binding is stimulated by other ribosomal proteins, e.g. L4, L17, and L20. It is important during the early stages of 50S assembly. It makes multiple contacts with different domains of the 23S rRNA in the assembled 50S subunit and ribosome. The globular domain of the protein is located near the polypeptide exit tunnel on the outside of the subunit, while an extended beta-hairpin is found that lines the wall of the exit tunnel in the center of the 70S ribosome. The protein is Large ribosomal subunit protein uL22 of Rhizobium meliloti (strain 1021) (Ensifer meliloti).